The primary structure comprises 237 residues: Proteasome subunit beta 2 (237 aa).

A compositionally biased stretch (polar residues) spans 1–14; it reads MNNWSQGSTPQGSD. The propeptide at 1–42 is removed in mature form; by autocatalysis; it reads MNNWSQGSTPQGSDPSPYAPELGSLPDGSQSDDHGDTVNKTG. Residues 1-45 form a disordered region; it reads MNNWSQGSTPQGSDPSPYAPELGSLPDGSQSDDHGDTVNKTGTTT. Catalysis depends on T43, which acts as the Nucleophile.

Belongs to the peptidase T1B family. The 20S proteasome core is composed of 14 alpha and 14 beta subunits that assemble into four stacked heptameric rings, resulting in a barrel-shaped structure. The two inner rings, each composed of seven catalytic beta subunits, are sandwiched by two outer rings, each composed of seven alpha subunits. The catalytic chamber with the active sites is on the inside of the barrel. Has a gated structure, the ends of the cylinder being occluded by the N-termini of the alpha-subunits. Is capped at one or both ends by the proteasome regulatory ATPase, PAN.

Its subcellular location is the cytoplasm. It carries out the reaction Cleavage of peptide bonds with very broad specificity.. Its activity is regulated as follows. The formation of the proteasomal ATPase PAN-20S proteasome complex, via the docking of the C-termini of PAN into the intersubunit pockets in the alpha-rings, triggers opening of the gate for substrate entry. Interconversion between the open-gate and close-gate conformations leads to a dynamic regulation of the 20S proteasome proteolysis activity. In terms of biological role, component of the proteasome core, a large protease complex with broad specificity involved in protein degradation. The sequence is that of Proteasome subunit beta 2 from Haloterrigena turkmenica (strain ATCC 51198 / DSM 5511 / JCM 9101 / NCIMB 13204 / VKM B-1734 / 4k) (Halococcus turkmenicus).